The sequence spans 115 residues: Arsenic resistance transcriptional regulator ArsR2 (115 aa).

The region spanning 1–90 is the HTH arsR-type domain; the sequence is MITPPDVFKS…EMLQVTLQAN (90 aa). Residues cysteine 30 and cysteine 32 each coordinate arsenite. The segment at residues 31–54 is a DNA-binding region (H-T-H motif); it reads VCELMCALNDSQPKISRHLAQLRS.

Homodimer.

It is found in the cytoplasm. Its function is as follows. Binds arsenite and regulates the expression of arsenic efflux pumps. In vitro, also binds antimony and bismuth, but not arsenate. This chain is Arsenic resistance transcriptional regulator ArsR2, found in Pseudomonas putida (strain ATCC 47054 / DSM 6125 / CFBP 8728 / NCIMB 11950 / KT2440).